A 179-amino-acid chain; its full sequence is tRNA (cytidine(56)-2'-O)-methyltransferase (179 aa).

S-adenosyl-L-methionine contacts are provided by residues Leu-82, 112–116, and 130–137; these read GAEKV and VGNQPHSE.

The protein belongs to the aTrm56 family. As to quaternary structure, homodimer.

The protein resides in the cytoplasm. It catalyses the reaction cytidine(56) in tRNA + S-adenosyl-L-methionine = 2'-O-methylcytidine(56) in tRNA + S-adenosyl-L-homocysteine + H(+). In terms of biological role, specifically catalyzes the AdoMet-dependent 2'-O-ribose methylation of cytidine at position 56 in tRNAs. In Methanococcus maripaludis (strain DSM 14266 / JCM 13030 / NBRC 101832 / S2 / LL), this protein is tRNA (cytidine(56)-2'-O)-methyltransferase.